The primary structure comprises 347 residues: NADH-ubiquinone oxidoreductase chain 2 (347 aa).

11 helical membrane passes run 1-21 (MNPLIFTTIVLTIIMGTMIVM), 25-45 (HWLTVWIGFEMNMLAVIPILM), 59-79 (YFLTQATASMLLMLAIIINLL), 96-116 (IIMTLAMAMKLGLSPFHFWVP), 122-142 (IQLSSGLILLTWQKLAPMSIL), 145-165 (IFPTINLNLMLLMSVLSVAIG), 178-198 (IMAYSSIAHMGWMTAIMAYNP), 201-221 (TLLNLVIYILLTTTTFMMFML), 237-257 (APLLTMTILTIMLSMGGLPPL), 276-296 (IITPTIMAVTALLNLYFYMRL), and 326-346 (VSPLIILSTLALPLSPILMLL).

This sequence belongs to the complex I subunit 2 family. In terms of assembly, core subunit of respiratory chain NADH dehydrogenase (Complex I) which is composed of 45 different subunits. Interacts with TMEM242.

The protein localises to the mitochondrion inner membrane. The catalysed reaction is a ubiquinone + NADH + 5 H(+)(in) = a ubiquinol + NAD(+) + 4 H(+)(out). Its function is as follows. Core subunit of the mitochondrial membrane respiratory chain NADH dehydrogenase (Complex I) which catalyzes electron transfer from NADH through the respiratory chain, using ubiquinone as an electron acceptor. Essential for the catalytic activity and assembly of complex I. The polypeptide is NADH-ubiquinone oxidoreductase chain 2 (Boneia bidens (Manado fruit bat)).